The primary structure comprises 91 residues: Small ribosomal subunit protein uS19 (91 aa).

It belongs to the universal ribosomal protein uS19 family.

Protein S19 forms a complex with S13 that binds strongly to the 16S ribosomal RNA. The polypeptide is Small ribosomal subunit protein uS19 (Aliarcobacter butzleri (strain RM4018) (Arcobacter butzleri)).